Reading from the N-terminus, the 202-residue chain is Shikimate kinase (202 aa).

20–25 contributes to the ATP binding site; sequence GSGKST. Ser-24 provides a ligand contact to Mg(2+). Positions 42, 66, and 88 each coordinate substrate. Position 126 (Arg-126) interacts with ATP. Substrate is bound at residue Arg-153.

The protein belongs to the shikimate kinase family. As to quaternary structure, monomer. Mg(2+) serves as cofactor.

It is found in the cytoplasm. The catalysed reaction is shikimate + ATP = 3-phosphoshikimate + ADP + H(+). It participates in metabolic intermediate biosynthesis; chorismate biosynthesis; chorismate from D-erythrose 4-phosphate and phosphoenolpyruvate: step 5/7. Catalyzes the specific phosphorylation of the 3-hydroxyl group of shikimic acid using ATP as a cosubstrate. This Chlorobium luteolum (strain DSM 273 / BCRC 81028 / 2530) (Pelodictyon luteolum) protein is Shikimate kinase.